Consider the following 127-residue polypeptide: UPF0325 protein VC_2264 (127 aa).

This sequence belongs to the UPF0325 family.

This is UPF0325 protein VC_2264 from Vibrio cholerae serotype O1 (strain ATCC 39315 / El Tor Inaba N16961).